Consider the following 465-residue polypeptide: Endo-1,3-1,4-beta-glycanase EglC (465 aa).

Hemolysin-type calcium-binding repeat units follow at residues 33-50 (YGTA…VDVT), 105-122 (FGNS…SQTI), and 123-140 (NGGA…ADTF). The 250-residue stretch at 213 to 462 (LDRSVLTQTF…YVKAYSLDAD (250 aa)) folds into the GH16 domain. Glutamate 349 serves as the catalytic Nucleophile. The active-site Proton donor is the glutamate 354.

It belongs to the glycosyl hydrolase 16 family.

It localises to the secreted. The protein operates within glycan metabolism; exopolysaccharide biosynthesis. Its function is as follows. Cleaves high molecular weight succinoglycan to yield LMW succinoglycan. Dynamically regulates the molecular weight distribution of succinoglycan by cleaving nascent succinoglycan only during a limited period after its synthesis, perhaps before it undergoes a time-dependent change in its conformation or aggregation state. The sequence is that of Endo-1,3-1,4-beta-glycanase EglC (eglC) from Rhizobium meliloti (strain 1021) (Ensifer meliloti).